Consider the following 120-residue polypeptide: Jacalin-related lectin 39 (120 aa).

The Jacalin-type lectin domain occupies 6–120 (SRDHADFVAH…KRTFDFGGFN (115 aa)).

It belongs to the jacalin lectin family.

The protein is Jacalin-related lectin 39 (JAL39) of Arabidopsis thaliana (Mouse-ear cress).